Reading from the N-terminus, the 206-residue chain is Interleukin-24 (206 aa).

The N-terminal stretch at 1-51 (MNFQQRLQSLWTLARPFCPPLLATASQMQMVVLPCLGFTLLLWSQVSGAQG) is a signal peptide. Cysteines 59 and 106 form a disulfide. Residues N85 and N99 are each glycosylated (N-linked (GlcNAc...) asparagine). A Glycyl lysine isopeptide (Lys-Gly) (interchain with G-Cter in ubiquitin) cross-link involves residue K122. N126 carries N-linked (GlcNAc...) asparagine glycosylation.

This sequence belongs to the IL-10 family. In terms of processing, glycosylated. Ubiquitination at Lys-122 promotes proteasomal degradation. In terms of tissue distribution, up-regulated in melanoma cells induced to terminally differentiate.

The protein resides in the secreted. Multifunctional cytokine mainly produced by T-cells that plays a regulatory role in immune response, tissue homeostasis, host defense, and oncogenesis. Possesses antiviral functions and induces the type I interferon response during influenza infection. Signals through two receptor complexes IL20RA/IL20RB or IL20RB/IL22RA1. In turn, stimulates the JAK1-STAT3 and MAPK pathways and promotes the secretion of pro-inflammatory mediators including IL8 and MMP1. Intracellularly, maintains endoplasmic reticulum homeostasis by restricting the eIF2alpha-CHOP pathway-mediated stress signal. In addition, acts as a quality control mechanism for the ubiquitin proteasome system by alerting the cell to proteasome dysfunction through activation of PKR/EIF2AK2. This chain is Interleukin-24 (IL24), found in Homo sapiens (Human).